Consider the following 74-residue polypeptide: Protein krueppel (74 aa).

4 C2H2-type zinc fingers span residues Glu1–His4, Phe10–His32, Tyr38–His60, and Tyr66–Lys74.

This sequence belongs to the krueppel C2H2-type zinc-finger protein family.

It is found in the nucleus. In terms of biological role, krueppel is a gap class segmentation protein. The protein is Protein krueppel (Kr) of Musca domestica (House fly).